A 131-amino-acid polypeptide reads, in one-letter code: MANIAGQYKLDKSENFDQFLDKLGVGFLVKTAAKTVKPTLEVAVDGDTYIFRSLSTFKNTEIKFKLGEEFEEDRADGKRVKTVIVKDGDNKFVQTQYGDKEVKVVREFKGDEVEVTASVDGVTSVRPYKRA.

Residues Arg-106 and 126–128 contribute to the (5Z,8Z,11Z,14Z)-eicosatetraenoate site; that span reads RPY. Residues Arg-106 and 126-128 contribute to the (9Z)-octadecenoate site; that span reads RPY.

This sequence belongs to the calycin superfamily. Fatty-acid binding protein (FABP) family.

It is found in the cytoplasm. Its function is as follows. FABPs are thought to play a role in the intracellular transport of long-chain fatty acids and their acyl-CoA esters. The protein is Fatty acid-binding protein of Lepidoglyphus destructor (Storage mite).